A 164-amino-acid chain; its full sequence is Dihydrofolate reductase (164 aa).

One can recognise a DHFR domain in the interval 2–162 (NISIIVAMSQ…FYVTFKILKK (161 aa)). Residue 6 to 8 (IVA) coordinates substrate. Residues 7–8 (VA) and 15–20 (IGQKNS) contribute to the NADP(+) site. Residue D28 coordinates substrate. 44–47 (GRKT) is an NADP(+) binding site. R58 is a binding site for substrate. NADP(+)-binding positions include 63–66 (LTRQ) and 96–101 (IGGSNL). A substrate-binding site is contributed by T115.

The protein belongs to the dihydrofolate reductase family.

The catalysed reaction is (6S)-5,6,7,8-tetrahydrofolate + NADP(+) = 7,8-dihydrofolate + NADPH + H(+). The protein operates within cofactor biosynthesis; tetrahydrofolate biosynthesis; 5,6,7,8-tetrahydrofolate from 7,8-dihydrofolate: step 1/1. Functionally, key enzyme in folate metabolism. Catalyzes an essential reaction for de novo glycine and purine synthesis, and for DNA precursor synthesis. The polypeptide is Dihydrofolate reductase (folA) (Buchnera aphidicola subsp. Baizongia pistaciae (strain Bp)).